Consider the following 367-residue polypeptide: Queuine tRNA-ribosyltransferase (367 aa).

Catalysis depends on aspartate 92, which acts as the Proton acceptor. Substrate contacts are provided by residues 92–96 (DSGGF), aspartate 146, glutamine 188, and glycine 215. Residues 246–252 (GVGTPKD) form an RNA binding region. Residue aspartate 265 is the Nucleophile of the active site. Zn(2+) contacts are provided by cysteine 303, cysteine 305, cysteine 308, and histidine 334.

The protein belongs to the queuine tRNA-ribosyltransferase family. Homodimer. Within each dimer, one monomer is responsible for RNA recognition and catalysis, while the other monomer binds to the replacement base PreQ1. The cofactor is Zn(2+).

It carries out the reaction 7-aminomethyl-7-carbaguanine + guanosine(34) in tRNA = 7-aminomethyl-7-carbaguanosine(34) in tRNA + guanine. It participates in tRNA modification; tRNA-queuosine biosynthesis. Catalyzes the base-exchange of a guanine (G) residue with the queuine precursor 7-aminomethyl-7-deazaguanine (PreQ1) at position 34 (anticodon wobble position) in tRNAs with GU(N) anticodons (tRNA-Asp, -Asn, -His and -Tyr). Catalysis occurs through a double-displacement mechanism. The nucleophile active site attacks the C1' of nucleotide 34 to detach the guanine base from the RNA, forming a covalent enzyme-RNA intermediate. The proton acceptor active site deprotonates the incoming PreQ1, allowing a nucleophilic attack on the C1' of the ribose to form the product. After dissociation, two additional enzymatic reactions on the tRNA convert PreQ1 to queuine (Q), resulting in the hypermodified nucleoside queuosine (7-(((4,5-cis-dihydroxy-2-cyclopenten-1-yl)amino)methyl)-7-deazaguanosine). The sequence is that of Queuine tRNA-ribosyltransferase from Francisella tularensis subsp. mediasiatica (strain FSC147).